Here is a 78-residue protein sequence, read N- to C-terminus: Pigment-dispersing hormone 2 peptides (78 aa).

Positions 1-21 (MRSGVFVAVLVVVVFALLTQG) are cleaved as a signal peptide. Ala75 carries the alanine amide modification.

It belongs to the arthropod PDH family. As to expression, eyestalk sinus gland.

Its subcellular location is the secreted. Functionally, the pigment-dispersing hormone causes the migration of the distal retinal pigment into the proximal end of the pigment chromatophore cells and thus decreases the amount of light entering the retinulas. May also function as a neurotransmitter and/or neuromodulator. The protein is Pigment-dispersing hormone 2 peptides (PDH2) of Callinectes sapidus (Blue crab).